We begin with the raw amino-acid sequence, 34 residues long: Protamine (34 aa).

A disordered region spans residues 1-34 (PRRRRQASRPVRRRRRTRRSTAERRRRRVVRRRR).

As to expression, testis.

The protein resides in the nucleus. It is found in the chromosome. Protamines substitute for histones in the chromatin of sperm during the haploid phase of spermatogenesis. They compact sperm DNA into a highly condensed, stable and inactive complex. This is Protamine from Dicentrarchus labrax (European seabass).